We begin with the raw amino-acid sequence, 217 residues long: GTP cyclohydrolase 1 (217 aa).

The Zn(2+) site is built by Cys-109, His-112, and Cys-180.

This sequence belongs to the GTP cyclohydrolase I family. In terms of assembly, toroid-shaped homodecamer, composed of two pentamers of five dimers.

It catalyses the reaction GTP + H2O = 7,8-dihydroneopterin 3'-triphosphate + formate + H(+). It participates in cofactor biosynthesis; 7,8-dihydroneopterin triphosphate biosynthesis; 7,8-dihydroneopterin triphosphate from GTP: step 1/1. The protein is GTP cyclohydrolase 1 of Vibrio parahaemolyticus serotype O3:K6 (strain RIMD 2210633).